A 224-amino-acid chain; its full sequence is ATP-dependent dethiobiotin synthetase BioD (224 aa).

A Mg(2+)-binding site is contributed by T18. The active site involves K39. Residue S43 coordinates substrate. Mg(2+) contacts are provided by D56 and E117. ATP contacts are provided by residues D56, 117-120, and 177-178; these read EGVG and NE.

The protein belongs to the dethiobiotin synthetase family. In terms of assembly, homodimer. Mg(2+) is required as a cofactor.

It is found in the cytoplasm. It catalyses the reaction (7R,8S)-7,8-diammoniononanoate + CO2 + ATP = (4R,5S)-dethiobiotin + ADP + phosphate + 3 H(+). It functions in the pathway cofactor biosynthesis; biotin biosynthesis; biotin from 7,8-diaminononanoate: step 1/2. Catalyzes a mechanistically unusual reaction, the ATP-dependent insertion of CO2 between the N7 and N8 nitrogen atoms of 7,8-diaminopelargonic acid (DAPA, also called 7,8-diammoniononanoate) to form a ureido ring. The chain is ATP-dependent dethiobiotin synthetase BioD from Xanthomonas oryzae pv. oryzae (strain MAFF 311018).